Here is a 103-residue protein sequence, read N- to C-terminus: Large ribosomal subunit protein eL30 (103 aa).

This sequence belongs to the eukaryotic ribosomal protein eL30 family.

The polypeptide is Large ribosomal subunit protein eL30 (Methanosarcina mazei (strain ATCC BAA-159 / DSM 3647 / Goe1 / Go1 / JCM 11833 / OCM 88) (Methanosarcina frisia)).